Here is a 278-residue protein sequence, read N- to C-terminus: ATP-dependent dethiobiotin synthetase BioD 1 (278 aa).

51–56 (NVGKTI) provides a ligand contact to ATP. Residue Thr55 participates in Mg(2+) binding. Lys76 is a catalytic residue. Asp102 is an ATP binding site. Residues Asp102 and Glu163 each coordinate Mg(2+). ATP-binding positions include 223–224 (NR) and 252–254 (PYI).

Belongs to the dethiobiotin synthetase family. As to quaternary structure, homodimer. Requires Mg(2+) as cofactor.

Its subcellular location is the cytoplasm. The enzyme catalyses (7R,8S)-7,8-diammoniononanoate + CO2 + ATP = (4R,5S)-dethiobiotin + ADP + phosphate + 3 H(+). The protein operates within cofactor biosynthesis; biotin biosynthesis; biotin from 7,8-diaminononanoate: step 1/2. Functionally, catalyzes a mechanistically unusual reaction, the ATP-dependent insertion of CO2 between the N7 and N8 nitrogen atoms of 7,8-diaminopelargonic acid (DAPA, also called 7,8-diammoniononanoate) to form a ureido ring. In Haemophilus ducreyi (strain 35000HP / ATCC 700724), this protein is ATP-dependent dethiobiotin synthetase BioD 1.